The following is a 914-amino-acid chain: Protein translocase subunit SecA (914 aa).

Residues glutamine 87, 105 to 109 (GEGKT), and aspartate 500 each bind ATP. The Zn(2+) site is built by cysteine 898, cysteine 900, cysteine 909, and histidine 910.

The protein belongs to the SecA family. As to quaternary structure, monomer and homodimer. Part of the essential Sec protein translocation apparatus which comprises SecA, SecYEG and auxiliary proteins SecDF-YajC and YidC. The cofactor is Zn(2+).

It is found in the cell inner membrane. It localises to the cytoplasm. It catalyses the reaction ATP + H2O + cellular proteinSide 1 = ADP + phosphate + cellular proteinSide 2.. Its function is as follows. Part of the Sec protein translocase complex. Interacts with the SecYEG preprotein conducting channel. Has a central role in coupling the hydrolysis of ATP to the transfer of proteins into and across the cell membrane, serving as an ATP-driven molecular motor driving the stepwise translocation of polypeptide chains across the membrane. The polypeptide is Protein translocase subunit SecA (Acidithiobacillus ferrooxidans (strain ATCC 23270 / DSM 14882 / CIP 104768 / NCIMB 8455) (Ferrobacillus ferrooxidans (strain ATCC 23270))).